Consider the following 504-residue polypeptide: U3 snoRNP-associated protein-like YAO (504 aa).

The interval 1 to 120 (MKYNNEKKKG…DDDDDEDDDE (120 aa)) is disordered. Residues 20-33 (GSNERDPFFEEEPK) are compositionally biased toward basic and acidic residues. Composition is skewed to acidic residues over residues 41–54 (DDDDIESVDSDAEE) and 70–81 (EVEDEDEFADET). Positions 89–106 (LAEEMLNRRREAMRRERE) are enriched in basic and acidic residues. Residues 107 to 120 (EADNDDDDDEDDDE) are compositionally biased toward acidic residues. WD repeat units follow at residues 159–198 (KHRRSVVSVALSDDDSRGFSASKDGTIMHWDVSSGKTDKY), 220–259 (NHSRESLALAVSSDGRYLATGGVDRHVHIWDVRTREHVQA), 262–301 (GHRNTVSCLCFRYGTSELYSGSFDRTVKVWNVEDKAFITE), 304–342 (GHQGEILAIDALRKERALTVGRDRTMLYHKVPESTRMIY), 344–382 (APASSLESCCFISDNEYLSGSDNGTVALWGMLKKKPVFV), 413–452 (SANSWVNAVATSRGSDLAASGAGNGFVRLWAVETNAIRPL), and 456–496 (PLTG…QNGV).

The protein belongs to the WD repeat RRP9 family. As to expression, expressed in tissues with active in cell division such as shoot apexes, root tips, lateral root primordia, embryos, endosperm, pollen grains and embryo sacs.

It is found in the nucleus. It localises to the nucleolus. Functionally, component of a nucleolar small nuclear ribonucleoprotein particle (snoRNP) thought to participate in the processing and modification of pre-ribosomal RNA. Essential for embryogenesis. Plays a critical role in embryo sac development and gametic cell fate. Required for the correct positioning of the first division plane of zygote. May function during early embryogenesis. The chain is U3 snoRNP-associated protein-like YAO from Arabidopsis thaliana (Mouse-ear cress).